Reading from the N-terminus, the 279-residue chain is Movement protein (279 aa).

This sequence belongs to the cucumovirus movement protein family.

Its subcellular location is the host cell junction. The protein resides in the host plasmodesma. Functionally, transports viral genome to neighboring plant cells directly through plasmosdesmata, without any budding. The movement protein allows efficient cell to cell propagation, by bypassing the host cell wall barrier. Acts by forming a tubular structure at the host plasmodesmata, enlarging it enough to allow free passage of virion capsids. In Cucumis sativus (Cucumber), this protein is Movement protein.